The following is a 451-amino-acid chain: Tubulin gamma-1 chain (451 aa).

Residue serine 131 is modified to Phosphoserine; by BRSK1. GTP is bound at residue 142–148 (AGGTGSG).

This sequence belongs to the tubulin family. As to quaternary structure, component of the gamma-tubulin ring complex (gTuRC) consisting of TUBGCP2, TUBGCP3, TUBGCP4, TUBGCP5 and TUBGCP6 and gamma-tubulin TUBG1 or TUBG2. TUBGCP2, TUBGCP3, TUBGCP4, TUBGCP5 and TUBGCP6 assemble in a 5:5:2:1:1 stoichiometry; each is associated with a gamma-tubulin, thereby arranging 14 gamma-tubulins in a helical manner. Gamma-tubulin at the first position is blocked by TUBGCP3 at the last position, allowing 13 protafilaments to grow into a microtubule. The gTuRC (via TUBGCP3 and TUBGCP6) interacts with ACTB and MZT1; the interactions form a luminal bridge that stabilizes the initial structure during complex assembly. The gTuRC (via TUBGCP2) interacts with MZT2A/MZT2B and CDK5RAP2 (via CM1 motif); the interactions play a role in gTuRC activation. Interacts with alpha-beta tubulin heterodimers; the interaction allows microtubules to nucleate from the gTuRC. Interacts with B9D2. Interacts with CDK5RAP2; the interaction is leading to centrosomal localization of TUBG1 and CDK5RAP2. Interacts with CIMAP3. Interacts with SAS6 and NUP62 at the centrosome. Interacts with EML3 (phosphorylated at 'Thr-881') and HAUS8. Interacts with DNM2; this interaction may participate in centrosome cohesion. Interacts with CCDC66. In terms of processing, phosphorylation at Ser-131 by BRSK1 regulates centrosome duplication, possibly by mediating relocation of gamma-tubulin and its associated proteins from the cytoplasm to the centrosome.

It is found in the cytoplasm. The protein localises to the cytoskeleton. The protein resides in the microtubule organizing center. Its subcellular location is the centrosome. It localises to the spindle. Its function is as follows. Tubulin is the major constituent of microtubules, protein filaments consisting of alpha- and beta-tubulin heterodimers. Gamma-tubulin is a key component of the gamma-tubulin ring complex (gTuRC) which mediates microtubule nucleation. The gTuRC regulates the minus-end nucleation of alpha-beta tubulin heterodimers that grow into microtubule protafilaments, a critical step in centrosome duplication and spindle formation. This is Tubulin gamma-1 chain from Bos taurus (Bovine).